The chain runs to 321 residues: Lactamase-like protein notP (321 aa).

Positions 108, 110, 112, and 113 each coordinate Zn(2+). Asp-112 acts as the Proton donor/acceptor in catalysis.

This sequence belongs to the metallo-beta-lactamase superfamily. Requires Zn(2+) as cofactor.

Lactamase-like protein; part of the gene cluster that mediates the biosynthesis of notoamide, a fungal indole alkaloid that belongs to a family of natural products containing a characteristic bicyclo[2.2.2]diazaoctane core. The first step of notoamide biosynthesis involves coupling of L-proline and L-tryptophan by the bimodular NRPS notE, to produce cyclo-L-tryptophan-L-proline called brevianamide F. The reverse prenyltransferase notF then acts as a deoxybrevianamide E synthase and converts brevianamide F to deoxybrevianamide E via reverse prenylation at C-2 of the indole ring leading to the bicyclo[2.2.2]diazaoctane core. Deoxybrevianamide E is further hydroxylated at C-6 of the indole ring, likely catalyzed by the cytochrome P450 monooxygenase notG, to yield 6-hydroxy-deoxybrevianamide E. 6-hydroxy-deoxybrevianamide E is a specific substrate of the prenyltransferase notC for normal prenylation at C-7 to produce 6-hydroxy-7-prenyl-deoxybrevianamide, also called notoamide S. As the proposed pivotal branching point in notoamide biosynthesis, notoamide S can be diverted to notoamide E through an oxidative pyran ring closure putatively catalyzed by either notH cytochrome P450 monooxygenase or the notD FAD-linked oxidoreductase. This step would be followed by an indole 2,3-epoxidation-initiated pinacol-like rearrangement catalyzed by the notB FAD-dependent monooxygenase leading to the formation of notoamide C and notoamide D. On the other hand notoamide S is converted to notoamide T by notH (or notD), a bifunctional oxidase that also functions as the intramolecular Diels-Alderase responsible for generation of (+)-notoamide T. To generate antipodal (-)-notoaminide T, notH' (or notD') in Aspergillus versicolor is expected to catalyze a Diels-Alder reaction leading to the opposite stereochemistry. The remaining oxidoreductase notD (or notH) likely catalyzes the oxidative pyran ring formation to yield (+)-stephacidin A. The FAD-dependent monooxygenase notI is highly similar to notB and is predicted to catalyze a similar conversion from (+)-stephacidin A to (-)-notoamide B via the 2,3-epoxidation of (+)-stephacidin A followed by a pinacol-type rearrangement. Finally, it remains unclear which enzyme could be responsible for the final hydroxylation steps leading to notoamide A and sclerotiamide. The function of notP in the notoamide biosynthesis has not been determined yet. This chain is Lactamase-like protein notP, found in Aspergillus sp. (strain MF297-2).